The chain runs to 532 residues: All-trans-retinyl ester 13-cis isomerohydrolase (532 aa).

The S-palmitoyl cysteine; in membrane form moiety is linked to residue Cys-112. Residues His-180, His-241, and His-313 each coordinate Fe cation. Cys-329 carries S-palmitoyl cysteine; in membrane form lipidation. His-527 serves as a coordination point for Fe cation.

It belongs to the carotenoid oxygenase family. Fe(2+) is required as a cofactor. In terms of processing, palmitoylated. Predominantly expressed in brain. Expressed at a low level in the eye.

Its subcellular location is the cytoplasm. The protein resides in the cell membrane. The catalysed reaction is an all-trans-retinyl ester + H2O = 13-cis-retinol + a fatty acid + H(+). It carries out the reaction lutein = (3R,3'S)-zeaxanthin. Specifically generates 13-cis retinol, a stereoisomeric form of retinoic acid. Capable of catalyzing the isomerization of lutein to meso-zeaxanthin an eye-specific carotenoid. The polypeptide is All-trans-retinyl ester 13-cis isomerohydrolase (rpe65b) (Danio rerio (Zebrafish)).